The following is a 46-amino-acid chain: Myoregulin (46 aa).

Residues 1–21 (MTGKNWILISTTTPKSLEDEI) are Cytoplasmic-facing. Residues 22–42 (VGRLLKILFVIFVDLISIIYV) form a helical membrane-spanning segment. Residues 43–46 (VITS) lie on the Lumenal side of the membrane.

As to quaternary structure, homooligomer. Monomer. Interacts with ATP2A1/SERCA1. Interacts as a monomer with ATP2A2/SERCA2; the interaction inhibits ATP2A2 activity.

Its subcellular location is the sarcoplasmic reticulum membrane. Inhibits the activity of ATP2A1/SERCA1 ATPase in sarcoplasmic reticulum by decreasing the apparent affinity of the ATPase for Ca(2+), thereby acting as a key regulator of skeletal muscle activity. Its high expression in adult skeletal muscle, suggests that it constitutes the predominant regulator of ATP2A1/SERCA1 in adult skeletal muscle. Also inhibits the activity of ATP2A2/SERCA2 and ATP2A3/SERCA3. The protein is Myoregulin of Homo sapiens (Human).